The chain runs to 112 residues: B3 domain-containing protein At1g43171 (112 aa).

A DNA-binding region (TF-B3) is located at residues D19–F112.

The protein localises to the nucleus. The protein is B3 domain-containing protein At1g43171 of Arabidopsis thaliana (Mouse-ear cress).